Here is a 41-residue protein sequence, read N- to C-terminus: Bacteriocin bavaricin-A (41 aa).

It belongs to the bacteriocin class IIA/YGNGV family.

It is found in the secreted. This heat stable bacteriocin shows activity against species of Lactobacillus, Listeria monocytogenes, Pediococcus, Enterococcus, Leuconostoc and Lactococcus. The sequence is that of Bacteriocin bavaricin-A from Latilactobacillus sakei (Lactobacillus sakei).